A 317-amino-acid chain; its full sequence is Probable porphobilinogen deaminase (317 aa).

Cysteine 234 carries the post-translational modification S-(dipyrrolylmethanemethyl)cysteine.

Belongs to the HMBS family. Dipyrromethane is required as a cofactor.

It carries out the reaction 4 porphobilinogen + H2O = hydroxymethylbilane + 4 NH4(+). It participates in porphyrin-containing compound metabolism; protoporphyrin-IX biosynthesis; coproporphyrinogen-III from 5-aminolevulinate: step 2/4. In terms of biological role, tetrapolymerization of the monopyrrole PBG into the hydroxymethylbilane pre-uroporphyrinogen in several discrete steps. This chain is Probable porphobilinogen deaminase, found in Methanosarcina acetivorans (strain ATCC 35395 / DSM 2834 / JCM 12185 / C2A).